Here is a 450-residue protein sequence, read N- to C-terminus: NADP-specific glutamate dehydrogenase (450 aa).

Lys111 is an active-site residue.

It belongs to the Glu/Leu/Phe/Val dehydrogenases family. Homohexamer.

It catalyses the reaction L-glutamate + NADP(+) + H2O = 2-oxoglutarate + NH4(+) + NADPH + H(+). This is NADP-specific glutamate dehydrogenase (GDHA) from Laccaria bicolor (strain S238N-H82 / ATCC MYA-4686) (Bicoloured deceiver).